Reading from the N-terminus, the 461-residue chain is Deoxyhypusine synthase (461 aa).

Residues 166–167, E331, H377, 403–405, and 412–418 contribute to the spermidine site; these read EH, GSD, and EAVSWGK. K418 serves as the catalytic Nucleophile. Residues 428–448 form a helical membrane-spanning segment; the sequence is VYSEVTIVFPLIVVHVFVAWV.

Belongs to the deoxyhypusine synthase family. In terms of assembly, heterotetramer formed by a homodimer of the non-catalytic regulatory subunit DHSp and a homodimer of the catalytic subunit DHSc where DHSc appears to bind spermidine and DHSp appears to bind NAD(+). NAD(+) is required as a cofactor.

The protein localises to the membrane. The enzyme catalyses [eIF5A protein]-L-lysine + spermidine = [eIF5A protein]-deoxyhypusine + propane-1,3-diamine. Its pathway is protein modification; eIF5A hypusination. With respect to regulation, allosterically activated by DHSp. Inhibited by spermididine analog N1-guanyl-1,7-diamineoheptane (GC7). In terms of biological role, in association with the non-catalytic regulatory subunit DHSp, catalyzes the NAD-dependent oxidative cleavage of spermidine and the subsequent transfer of the butylamine moiety of spermidine to the epsilon-amino group of a specific lysine residue of the eIF5A precursor protein to form the intermediate deoxyhypusine residue. Regulates protein levels of its regulatory subunit DHSp. Required for cell growth and survival. This is Deoxyhypusine synthase from Trypanosoma brucei brucei (strain 927/4 GUTat10.1).